The primary structure comprises 399 residues: Zinc finger HIT domain-containing protein 2 (399 aa).

Methionine 1 is modified (N-acetylmethionine). Zn(2+) contacts are provided by cysteine 7, cysteine 10, cysteine 22, cysteine 25, cysteine 30, cysteine 34, histidine 38, and cysteine 41. An HIT-type zinc finger spans residues 7-41 (CGFCPTGEAQPARYTCPRCNVPYCSLRCYRAHGSC). Disordered regions lie at residues 71–97 (LRQQ…GLSG) and 141–166 (EELG…PEPV).

Interacts (via HIT-type zinc finger) with RUVBL2 in the presence of ATP or ADP; shows a stronger interaction in the presence of ADP.

May act as a bridging factor mediating the interaction between the R2TP/Prefoldin-like (R2TP/PFDL) complex and U5 small nuclear ribonucleoprotein (U5 snRNP). Required for the interaction of R2TP complex subunit RPAP3 and prefoldin-like subunit URI1 with U5 snRNP proteins EFTUD2 and PRPF8. May play a role in regulating the composition of the U5 snRNP complex. The protein is Zinc finger HIT domain-containing protein 2 (ZNHIT2) of Bos taurus (Bovine).